Reading from the N-terminus, the 268-residue chain is Thiazole synthase (268 aa).

K111 serves as the catalytic Schiff-base intermediate with DXP. 1-deoxy-D-xylulose 5-phosphate contacts are provided by residues G172, 198–199, and 220–221; these read AG and NT.

This sequence belongs to the ThiG family. As to quaternary structure, homotetramer. Forms heterodimers with either ThiH or ThiS.

It is found in the cytoplasm. It catalyses the reaction [ThiS sulfur-carrier protein]-C-terminal-Gly-aminoethanethioate + 2-iminoacetate + 1-deoxy-D-xylulose 5-phosphate = [ThiS sulfur-carrier protein]-C-terminal Gly-Gly + 2-[(2R,5Z)-2-carboxy-4-methylthiazol-5(2H)-ylidene]ethyl phosphate + 2 H2O + H(+). The protein operates within cofactor biosynthesis; thiamine diphosphate biosynthesis. Catalyzes the rearrangement of 1-deoxy-D-xylulose 5-phosphate (DXP) to produce the thiazole phosphate moiety of thiamine. Sulfur is provided by the thiocarboxylate moiety of the carrier protein ThiS. In vitro, sulfur can be provided by H(2)S. This chain is Thiazole synthase, found in Caulobacter sp. (strain K31).